A 90-amino-acid polypeptide reads, in one-letter code: MAVKIRLKRMGAKKSPFYRVVVADSRSPRDGRFIEEIGTYNPVAQPAEVKIDEEAALKWLGNGAKPSDTVRNLFSSQGIMEKFHLSKQGK.

Belongs to the bacterial ribosomal protein bS16 family.

The sequence is that of Small ribosomal subunit protein bS16 from Bacillus cytotoxicus (strain DSM 22905 / CIP 110041 / 391-98 / NVH 391-98).